Consider the following 673-residue polypeptide: Armadillo repeat-containing protein 8 (673 aa).

ARM repeat units lie at residues 51-92 (NKQK…SLSM), 95-134 (ENNI…TVFI), 138-176 (TPVQ…HCCK), 178-217 (PEHQ…VLAY), 225-265 (TLVN…YMCR), 269-309 (IRTE…YLME), 313-352 (ELQR…HDLK), 374-413 (DIRK…SLSR), 416-455 (QQLR…NLLL), 458-497 (SPSK…NMAF), 501-540 (QKVK…NLLS), 543-585 (PHID…NIAD), 588-627 (TAKE…NLIW), and 634-673 (QERQ…QYLA).

Identified in the CTLH complex that contains at least MAEA, RMND5A (or alternatively its paralog RMND5B), GID8, WDR26, and RANBP9 and/or RANBP10; ARMC8 has an ancillary role in the complex.

It is found in the nucleus. It localises to the cytoplasm. Component of the CTLH E3 ubiquitin-protein ligase complex that mediates ubiquitination and subsequent proteasomal degradation of target proteins. In Danio rerio (Zebrafish), this protein is Armadillo repeat-containing protein 8 (armc8).